Here is a 223-residue protein sequence, read N- to C-terminus: Ribose-5-phosphate isomerase A (223 aa).

Residues 29–32 (TGST), 82–85 (DGAD), and 95–98 (KGGG) contribute to the substrate site. Residue Glu104 is the Proton acceptor of the active site. Lys122 lines the substrate pocket.

This sequence belongs to the ribose 5-phosphate isomerase family. Homodimer.

It carries out the reaction aldehydo-D-ribose 5-phosphate = D-ribulose 5-phosphate. It participates in carbohydrate degradation; pentose phosphate pathway; D-ribose 5-phosphate from D-ribulose 5-phosphate (non-oxidative stage): step 1/1. In terms of biological role, catalyzes the reversible conversion of ribose-5-phosphate to ribulose 5-phosphate. In Neisseria meningitidis serogroup C (strain 053442), this protein is Ribose-5-phosphate isomerase A.